A 121-amino-acid polypeptide reads, in one-letter code: uncharacterized protein (121 aa).

The tract at residues Asn-85–Ser-111 is disordered. A compositionally biased stretch (polar residues) spans Ile-100 to Ser-111.

This is an uncharacterized protein from Dictyostelium discoideum (Social amoeba).